A 169-amino-acid chain; its full sequence is NADH-quinone oxidoreductase subunit I (169 aa).

4Fe-4S ferredoxin-type domains are found at residues Arg-61–Glu-90 and Thr-100–Ile-129. Residues Cys-70, Cys-73, Cys-76, Cys-80, Cys-109, Cys-112, Cys-115, and Cys-119 each contribute to the [4Fe-4S] cluster site.

Belongs to the complex I 23 kDa subunit family. NDH-1 is composed of 14 different subunits. Subunits NuoA, H, J, K, L, M, N constitute the membrane sector of the complex. The cofactor is [4Fe-4S] cluster.

It is found in the cell inner membrane. The enzyme catalyses a quinone + NADH + 5 H(+)(in) = a quinol + NAD(+) + 4 H(+)(out). Its function is as follows. NDH-1 shuttles electrons from NADH, via FMN and iron-sulfur (Fe-S) centers, to quinones in the respiratory chain. The immediate electron acceptor for the enzyme in this species is believed to be ubiquinone. Couples the redox reaction to proton translocation (for every two electrons transferred, four hydrogen ions are translocated across the cytoplasmic membrane), and thus conserves the redox energy in a proton gradient. The sequence is that of NADH-quinone oxidoreductase subunit I from Verminephrobacter eiseniae (strain EF01-2).